Reading from the N-terminus, the 611-residue chain is Protein decapping 5 (611 aa).

Positions 9-92 (KSSSAADSYV…IKDLQVKASP (84 aa)) constitute a Sm domain. 6 disordered regions span residues 111–153 (HYPS…AMPL), 183–238 (GLPQ…PSSL), 264–301 (SSSL…PTLP), 318–362 (EAST…DKPK), 396–455 (QVSS…AGRS), and 519–611 (FFDS…NRTT). 2 stretches are compositionally biased toward polar residues: residues 117–140 (PTSG…NGQP) and 203–214 (NSLQQPLQYPNF). The span at 264-281 (SSSLQSTLQSAPSPSLAS) shows a compositional bias: low complexity. Polar residues-rich tracts occupy residues 318 to 330 (EAST…NKPS), 396 to 413 (QVSS…TSEA), and 424 to 437 (ARPT…SFPN). Residues 441-453 (YRGRGRGRGRGAG) are compositionally biased toward basic residues. A DFDF domain is found at 453 to 489 (GRSHQVMKFTEDFDFTAMNEKFNKDEVWGHLGKSTTL). The FFD box signature appears at 512–527 (PVYNKDDFFDSLSSNT). Positions 528 to 547 (IDRESQNSRPRFSEQRKLDT) are enriched in basic and acidic residues. Positions 534–554 (NSRPRFSEQRKLDTETFGEFS) match the TFG box motif. Gly residues predominate over residues 559-604 (GRGGRGGYGRNNGYSRGGYGGRGYGGYGGRGGGGGGYGYGGRGQGR).

It belongs to the LSM14 family. Homodimer. Component of the decapping complex. Interacts with DCP1 and DCP2.

It is found in the cytoplasm. It localises to the P-body. Functionally, as a component of the decapping complex, involved in the degradation of mRNAs. Promotes P-body formation. Translational repressor. The polypeptide is Protein decapping 5 (DCP5) (Arabidopsis thaliana (Mouse-ear cress)).